Reading from the N-terminus, the 161-residue chain is MVNRLILMVVVVFITDSVMGTAEVMSHVTAHFGKALEECREESGLPVEVMDEFKHFWREDFEVVHRELGCAIICMSNKFELLQDDTRIHHVKMHDYIKSFPNGQVLSEKMVQLIHNCEKQYDDIADDCDRVVKVAACFKKDAKKEGIAPEVAMIEAVIEKY.

An N-terminal signal peptide occupies residues 1–20; it reads MVNRLILMVVVVFITDSVMG. 3 cysteine pairs are disulfide-bonded: cysteine 39/cysteine 74, cysteine 70/cysteine 128, and cysteine 117/cysteine 137.

It belongs to the PBP/GOBP family. As to quaternary structure, homodimer. As to expression, olfactory tissue; expressed by the glia-like support cells that ensheathe the sensory neurons and line the base of the sensillum lumen.

Present in the aqueous fluid surrounding olfactory sensory dendrites and are thought to aid in the capture and transport of hydrophobic odorants into and through this fluid. The chain is General odorant-binding protein 2 (GOBP2) from Manduca sexta (Tobacco hawkmoth).